The sequence spans 375 residues: Killer cell immunoglobulin-like receptor 2DL5A (375 aa).

The signal sequence occupies residues 1–21; that stretch reads MSLMVISMACVGFFLLQGAWT. Over 22–238 the chain is Extracellular; sequence HEGGQDKPLL…PSSKTGIRRH (217 aa). 2 Ig-like C2-type domains span residues 42-102 and 137-200; these read GGHV…HPRS and GENV…LHDS. Cys-49 and Cys-95 are joined by a disulfide. Asn-139, Asn-173, and Asn-218 each carry an N-linked (GlcNAc...) asparagine glycan. Cysteines 144 and 193 form a disulfide. The tract at residues 213–233 is disordered; that stretch reads VSVTGNSSSSSSSPTEPSSKT. Low complexity predominate over residues 219–231; the sequence is SSSSSSSPTEPSS. A helical transmembrane segment spans residues 239–259; the sequence is LHILIGTSVAIILFIILFFFL. The Cytoplasmic portion of the chain corresponds to 260 to 375; that stretch reads LHCCCSNKKN…ASSHVPAAGI (116 aa). The segment at 334–375 is disordered; that stretch reads AKPRSLSPAHKHHSQALRGSSRETTALSQNRVASSHVPAAGI. The span at 355-366 shows a compositional bias: polar residues; it reads RETTALSQNRVA.

Belongs to the immunoglobulin superfamily.

The protein resides in the cell membrane. In terms of biological role, receptor on natural killer (NK) cells for HLA-C alleles. Inhibits the activity of NK cells thus preventing cell lysis. This is Killer cell immunoglobulin-like receptor 2DL5A (KIR2DL5A) from Homo sapiens (Human).